Consider the following 211-residue polypeptide: Histidine biosynthesis bifunctional protein HisIE (211 aa).

The phosphoribosyl-AMP cyclohydrolase stretch occupies residues 1 to 122 (MSFKTAEVSS…DPQEESQMVW (122 aa)). The phosphoribosyl-ATP pyrophosphohydrolase stretch occupies residues 123–211 (LHQLEQLLAA…VINKLKERHK (89 aa)).

In the N-terminal section; belongs to the PRA-CH family. It in the C-terminal section; belongs to the PRA-PH family.

The protein resides in the cytoplasm. The enzyme catalyses 1-(5-phospho-beta-D-ribosyl)-ATP + H2O = 1-(5-phospho-beta-D-ribosyl)-5'-AMP + diphosphate + H(+). The catalysed reaction is 1-(5-phospho-beta-D-ribosyl)-5'-AMP + H2O = 1-(5-phospho-beta-D-ribosyl)-5-[(5-phospho-beta-D-ribosylamino)methylideneamino]imidazole-4-carboxamide. It functions in the pathway amino-acid biosynthesis; L-histidine biosynthesis; L-histidine from 5-phospho-alpha-D-ribose 1-diphosphate: step 2/9. The protein operates within amino-acid biosynthesis; L-histidine biosynthesis; L-histidine from 5-phospho-alpha-D-ribose 1-diphosphate: step 3/9. This Vibrio vulnificus (strain CMCP6) protein is Histidine biosynthesis bifunctional protein HisIE.